The sequence spans 383 residues: Homeobox protein SHOOT MERISTEMLESS (383 aa).

The tract at residues 37 to 58 is disordered; that stretch reads HQQHHGHDQQHQHQQQHDGYAY. An ELK domain is found at 263 to 283; that stretch reads ELKGQLLRKYSGYLGSLKQEF. A DNA-binding region (homeobox; TALE-type) is located at residues 284-347; that stretch reads MKKRKKGKLP…NQRKRHWKPS (64 aa).

Belongs to the TALE/KNOX homeobox family.

It localises to the nucleus. Functionally, required for shoot apical meristem formation during embryogenesis. Probably binds to the DNA sequence 5'-TGAC-3'. The polypeptide is Homeobox protein SHOOT MERISTEMLESS (STM) (Brassica oleracea (Wild cabbage)).